The following is a 578-amino-acid chain: Pentatricopeptide repeat-containing protein At4g22760 (578 aa).

13 PPR repeats span residues 68–102 (DSFS…GIPP), 103–137 (SSHA…GLCG), 138–168 (CVYV…IAEK), 169–203 (NTVS…DAVS), 204–230 (WNLI…MPLK), 231–261 (SPAS…MPQK), 262–292 (NGVS…MSKK), 293–327 (DKLV…NSYI), 330–364 (DEIT…GIKI), 365–395 (DDLL…LNKK), 396–430 (DTVS…KIPP), 431–465 (NVVT…NLEP), and 466–496 (SADH…MPMQ). The tract at residues 501–576 (VWGALLLASG…TLGCSWVEGS (76 aa)) is type E motif.

The protein belongs to the PPR family. PCMP-E subfamily.

In Arabidopsis thaliana (Mouse-ear cress), this protein is Pentatricopeptide repeat-containing protein At4g22760 (PCMP-E6).